We begin with the raw amino-acid sequence, 214 residues long: A-type ATP synthase subunit D (214 aa).

Belongs to the V-ATPase D subunit family. In terms of assembly, has multiple subunits with at least A(3), B(3), C, D, E, F, H, I and proteolipid K(x).

Its subcellular location is the cell membrane. Functionally, component of the A-type ATP synthase that produces ATP from ADP in the presence of a proton gradient across the membrane. The chain is A-type ATP synthase subunit D from Pyrococcus horikoshii (strain ATCC 700860 / DSM 12428 / JCM 9974 / NBRC 100139 / OT-3).